Here is a 794-residue protein sequence, read N- to C-terminus: Phenylalanine--tRNA ligase beta subunit (794 aa).

The tRNA-binding domain maps to 39-148 (APAFDNVVVA…SDAPVGQAIR (110 aa)). The B5 domain occupies 399–474 (PVRKPVLLRT…RLYGYDNIPS (76 aa)). D452, D458, E461, and E462 together coordinate Mg(2+). The FDX-ACB domain maps to 700–793 (SKFPPVIRDL…FEQAFGAQLR (94 aa)).

It belongs to the phenylalanyl-tRNA synthetase beta subunit family. Type 1 subfamily. As to quaternary structure, tetramer of two alpha and two beta subunits. The cofactor is Mg(2+).

The protein resides in the cytoplasm. It catalyses the reaction tRNA(Phe) + L-phenylalanine + ATP = L-phenylalanyl-tRNA(Phe) + AMP + diphosphate + H(+). The chain is Phenylalanine--tRNA ligase beta subunit from Dechloromonas aromatica (strain RCB).